The chain runs to 87 residues: UPF0250 protein YPK_3025 (87 aa).

Belongs to the UPF0250 family.

This chain is UPF0250 protein YPK_3025, found in Yersinia pseudotuberculosis serotype O:3 (strain YPIII).